Reading from the N-terminus, the 79-residue chain is ATP synthase subunit c (79 aa).

The next 2 membrane-spanning stretches (helical) occupy residues 11 to 31 (MAAA…IGIL) and 53 to 73 (FFIV…LGLY).

Belongs to the ATPase C chain family. In terms of assembly, F-type ATPases have 2 components, F(1) - the catalytic core - and F(0) - the membrane proton channel. F(1) has five subunits: alpha(3), beta(3), gamma(1), delta(1), epsilon(1). F(0) has three main subunits: a(1), b(2) and c(10-14). The alpha and beta chains form an alternating ring which encloses part of the gamma chain. F(1) is attached to F(0) by a central stalk formed by the gamma and epsilon chains, while a peripheral stalk is formed by the delta and b chains.

Its subcellular location is the cell inner membrane. In terms of biological role, f(1)F(0) ATP synthase produces ATP from ADP in the presence of a proton or sodium gradient. F-type ATPases consist of two structural domains, F(1) containing the extramembraneous catalytic core and F(0) containing the membrane proton channel, linked together by a central stalk and a peripheral stalk. During catalysis, ATP synthesis in the catalytic domain of F(1) is coupled via a rotary mechanism of the central stalk subunits to proton translocation. Key component of the F(0) channel; it plays a direct role in translocation across the membrane. A homomeric c-ring of between 10-14 subunits forms the central stalk rotor element with the F(1) delta and epsilon subunits. In Serratia proteamaculans (strain 568), this protein is ATP synthase subunit c.